The primary structure comprises 271 residues: Thiamine thiazole synthase (271 aa).

NAD(+) is bound by residues Ser39, 58–59 (ER), Gly66, Val130, and 158–160 (HVD). The Fe cation site is built by Asp160 and His175. NAD(+) is bound at residue Met225. Arg235 is a binding site for glycine.

It belongs to the THI4 family. In terms of assembly, homooctamer; tetramer of dimers. Requires Fe(2+) as cofactor.

It catalyses the reaction hydrogen sulfide + glycine + NAD(+) = ADP-5-ethyl-4-methylthiazole-2-carboxylate + nicotinamide + 3 H2O + H(+). It participates in cofactor biosynthesis; thiamine diphosphate biosynthesis. Involved in the biosynthesis of the thiazole moiety of thiamine. Catalyzes the conversion of NAD and glycine to adenosine diphosphate 5-(2-hydroxyethyl)-4-methylthiazole-2-carboxylate (ADT), an adenylated thiazole intermediate, using free sulfide as a source of sulfur. This Metallosphaera sedula (strain ATCC 51363 / DSM 5348 / JCM 9185 / NBRC 15509 / TH2) protein is Thiamine thiazole synthase.